Consider the following 1404-residue polypeptide: ABC transporter G family member 47 (1404 aa).

Positions 156–423 constitute an ABC transporter 1 domain; that stretch reads GNALHITRKK…FQSIGFKCPE (268 aa). ATP is bound at residue 189 to 196; that stretch reads GPPGSGKT. Residues 501–714 enclose the ABC transmembrane type-2 1 domain; sequence ELLQANIDRE…ALNTLAVNEF (214 aa). Transmembrane regions (helical) follow at residues 519-539, 565-585, 607-627, 638-658, 663-683, 692-712, and 751-771; these read FLYI…MTVF, MIMF…PVFF, TPIS…VIGF, FLAL…IASL, VVAS…SGFI, WWIW…LAVN, and VGAL…CLIF. Residues 808-1059 enclose the ABC transporter 2 domain; that stretch reads ITFEDIKYSI…ELIRYFEAIE (252 aa). 852–859 contacts ATP; it reads GVSGAGKT. One can recognise an ABC transmembrane type-2 2 domain in the interval 1132 to 1346; that stretch reads TQCLACLWKQ…TLNGLVTSQF (215 aa). 7 helical membrane passes run 1152–1172, 1183–1199, 1239–1259, 1266–1286, 1298–1318, 1321–1341, and 1373–1393; these read IAVK…MFWG, LFSA…TMGV, LPYI…MIGY, FFWY…YGMM, TVVS…LIPL, IPIW…LNGL, and LLWV…FLFG.

Belongs to the ABC transporter superfamily. ABCG family. PDR (TC 3.A.1.205) subfamily.

The protein resides in the membrane. In terms of biological role, may be a general defense protein. This chain is ABC transporter G family member 47, found in Oryza sativa subsp. japonica (Rice).